A 267-amino-acid chain; its full sequence is Eukaryotic translation initiation factor 3 subunit K (267 aa).

Residues 46–233 enclose the PCI domain; sequence FDCYANLALL…EARSEVKSER (188 aa).

The protein belongs to the eIF-3 subunit K family. In terms of assembly, component of the eukaryotic translation initiation factor 3 (eIF-3) complex.

Its subcellular location is the cytoplasm. Functionally, component of the eukaryotic translation initiation factor 3 (eIF-3) complex, which is involved in protein synthesis of a specialized repertoire of mRNAs and, together with other initiation factors, stimulates binding of mRNA and methionyl-tRNAi to the 40S ribosome. The eIF-3 complex specifically targets and initiates translation of a subset of mRNAs involved in cell proliferation. This Aspergillus niger (strain ATCC MYA-4892 / CBS 513.88 / FGSC A1513) protein is Eukaryotic translation initiation factor 3 subunit K.